The primary structure comprises 205 residues: NADH-ubiquinone oxidoreductase chain 6 (205 aa).

The next 3 helical transmembrane spans lie at 48–68 (FFAMIFPVVHIGAIAVSFLFV), 86–106 (YLPVSGIIGLIFWWEMFFILD), and 150–170 (VWFLVPSLILLVAMIGAIVLT).

It belongs to the complex I subunit 6 family. As to quaternary structure, complex I is composed of about 45 different subunits.

The protein localises to the mitochondrion membrane. It carries out the reaction a ubiquinone + NADH + 5 H(+)(in) = a ubiquinol + NAD(+) + 4 H(+)(out). Its function is as follows. Core subunit of the mitochondrial membrane respiratory chain NADH dehydrogenase (Complex I) that is believed to belong to the minimal assembly required for catalysis. Complex I functions in the transfer of electrons from NADH to the respiratory chain. The immediate electron acceptor for the enzyme is believed to be ubiquinone. The chain is NADH-ubiquinone oxidoreductase chain 6 (ND6) from Brassica campestris (Field mustard).